Reading from the N-terminus, the 282-residue chain is 4-hydroxy-3-methylbut-2-enyl diphosphate reductase (282 aa).

Cys-12 contacts [4Fe-4S] cluster. Residues His-40 and His-72 each contribute to the (2E)-4-hydroxy-3-methylbut-2-enyl diphosphate site. The dimethylallyl diphosphate site is built by His-40 and His-72. Isopentenyl diphosphate is bound by residues His-40 and His-72. Cys-94 is a [4Fe-4S] cluster binding site. His-122 contributes to the (2E)-4-hydroxy-3-methylbut-2-enyl diphosphate binding site. His-122 contacts dimethylallyl diphosphate. His-122 contributes to the isopentenyl diphosphate binding site. Glu-124 serves as the catalytic Proton donor. Thr-160 provides a ligand contact to (2E)-4-hydroxy-3-methylbut-2-enyl diphosphate. Residue Cys-188 participates in [4Fe-4S] cluster binding. Residues Ser-216, Asn-218, and Ser-260 each coordinate (2E)-4-hydroxy-3-methylbut-2-enyl diphosphate. Dimethylallyl diphosphate-binding residues include Ser-216, Asn-218, and Ser-260. Isopentenyl diphosphate-binding residues include Ser-216, Asn-218, and Ser-260.

The protein belongs to the IspH family. It depends on [4Fe-4S] cluster as a cofactor.

It carries out the reaction isopentenyl diphosphate + 2 oxidized [2Fe-2S]-[ferredoxin] + H2O = (2E)-4-hydroxy-3-methylbut-2-enyl diphosphate + 2 reduced [2Fe-2S]-[ferredoxin] + 2 H(+). It catalyses the reaction dimethylallyl diphosphate + 2 oxidized [2Fe-2S]-[ferredoxin] + H2O = (2E)-4-hydroxy-3-methylbut-2-enyl diphosphate + 2 reduced [2Fe-2S]-[ferredoxin] + 2 H(+). It participates in isoprenoid biosynthesis; dimethylallyl diphosphate biosynthesis; dimethylallyl diphosphate from (2E)-4-hydroxy-3-methylbutenyl diphosphate: step 1/1. The protein operates within isoprenoid biosynthesis; isopentenyl diphosphate biosynthesis via DXP pathway; isopentenyl diphosphate from 1-deoxy-D-xylulose 5-phosphate: step 6/6. Functionally, catalyzes the conversion of 1-hydroxy-2-methyl-2-(E)-butenyl 4-diphosphate (HMBPP) into a mixture of isopentenyl diphosphate (IPP) and dimethylallyl diphosphate (DMAPP). Acts in the terminal step of the DOXP/MEP pathway for isoprenoid precursor biosynthesis. This Geobacter metallireducens (strain ATCC 53774 / DSM 7210 / GS-15) protein is 4-hydroxy-3-methylbut-2-enyl diphosphate reductase.